The sequence spans 823 residues: Leucine--tRNA ligase (823 aa).

The 'HIGH' region motif lies at 55 to 65 (PYPSGNLHIGH). Positions 590–594 (KMSKS) match the 'KMSKS' region motif. Residue Lys593 coordinates ATP.

Belongs to the class-I aminoacyl-tRNA synthetase family.

The protein resides in the cytoplasm. The enzyme catalyses tRNA(Leu) + L-leucine + ATP = L-leucyl-tRNA(Leu) + AMP + diphosphate. The protein is Leucine--tRNA ligase of Deinococcus radiodurans (strain ATCC 13939 / DSM 20539 / JCM 16871 / CCUG 27074 / LMG 4051 / NBRC 15346 / NCIMB 9279 / VKM B-1422 / R1).